A 262-amino-acid chain; its full sequence is MLFAVIGHPIEHSLSPLLHKISFELMKVEAEYVKVDVPPHRLGDFMSSVDMIFNGINVTIPHKVEVLKYVDVADDLVNEVGAANTLKIKDGKIYAFNTDVEGVRGSIKDAVDPKGLKVAVLGAGGAARAAVVALRDEAQVTVFNRTLEKAKRLAEELGVDYAGLNEVDKIKKHDIIINATPVGMDGVSMPIPPDVIESRHVLMDMVYRPLYTPFLKVGLAKGAKTVNGLKMLVIQGMESEKVWLGASPYWRDVYERLLASLA.

Shikimate contacts are provided by residues 13–15 and Thr-59; that span reads SLS. The active-site Proton acceptor is the Lys-63. NADP(+) is bound at residue Asp-75. Shikimate is bound by residues Asn-84 and Asp-99. NADP(+)-binding positions include 122–126, 144–149, and Met-205; these read GAGGA and NRTLEK. Tyr-207 lines the shikimate pocket. Gly-228 is an NADP(+) binding site.

Belongs to the shikimate dehydrogenase family. Homodimer.

It catalyses the reaction shikimate + NADP(+) = 3-dehydroshikimate + NADPH + H(+). It functions in the pathway metabolic intermediate biosynthesis; chorismate biosynthesis; chorismate from D-erythrose 4-phosphate and phosphoenolpyruvate: step 4/7. Involved in the biosynthesis of the chorismate, which leads to the biosynthesis of aromatic amino acids. Catalyzes the reversible NADPH linked reduction of 3-dehydroshikimate (DHSA) to yield shikimate (SA). In Ignicoccus hospitalis (strain KIN4/I / DSM 18386 / JCM 14125), this protein is Shikimate dehydrogenase (NADP(+)).